A 467-amino-acid chain; its full sequence is Acid phosphatase PHO12 (467 aa).

The signal sequence occupies residues 1–17 (MLKSAVYSILAASLVNA). Catalysis depends on histidine 75, which acts as the Nucleophile. 5 N-linked (GlcNAc...) asparagine glycosylation sites follow: asparagine 97, asparagine 162, asparagine 192, asparagine 250, and asparagine 315. The active-site Proton donor is the aspartate 338. Asparagine 356, asparagine 390, asparagine 439, asparagine 445, and asparagine 461 each carry an N-linked (GlcNAc...) asparagine glycan.

Belongs to the histidine acid phosphatase family. Post-translationally, glycosylated during secretion across the membrane.

It catalyses the reaction a phosphate monoester + H2O = an alcohol + phosphate. This chain is Acid phosphatase PHO12 (PHO12), found in Saccharomyces cerevisiae (strain ATCC 204508 / S288c) (Baker's yeast).